The primary structure comprises 140 residues: Sex-regulated protein janus-B (140 aa).

Arg42 lines the substrate pocket. His69 acts as the Proton acceptor in catalysis. 110 to 112 (SRT) is a substrate binding site.

Belongs to the janus family.

Functionally, janA and janB regulate somatic sex differentiation. In Drosophila orena (Fruit fly), this protein is Sex-regulated protein janus-B (janB).